We begin with the raw amino-acid sequence, 192 residues long: 7-methyl-GTP pyrophosphatase (192 aa).

Asp70 acts as the Proton acceptor in catalysis.

Belongs to the Maf family. YceF subfamily. Requires a divalent metal cation as cofactor.

The protein localises to the cytoplasm. It carries out the reaction N(7)-methyl-GTP + H2O = N(7)-methyl-GMP + diphosphate + H(+). Its function is as follows. Nucleoside triphosphate pyrophosphatase that hydrolyzes 7-methyl-GTP (m(7)GTP). May have a dual role in cell division arrest and in preventing the incorporation of modified nucleotides into cellular nucleic acids. The sequence is that of 7-methyl-GTP pyrophosphatase from Xanthomonas campestris pv. campestris (strain 8004).